Consider the following 79-residue polypeptide: Probable 26S proteasome complex subunit sem1 (79 aa).

A compositionally biased stretch (basic and acidic residues) spans 1–21 (MSAPDKEKEKEKEETNNKSED). Residues 1–30 (MSAPDKEKEKEKEETNNKSEDLGLLEEDDE) are disordered. A Phosphoserine modification is found at serine 19.

Belongs to the DSS1/SEM1 family. As to quaternary structure, part of the 26S proteasome.

Its function is as follows. Subunit of the 26S proteasome which plays a role in ubiquitin-dependent proteolysis. The chain is Probable 26S proteasome complex subunit sem1 from Drosophila melanogaster (Fruit fly).